The following is a 192-amino-acid chain: MNATTEPFTPSADLAKPSVADAVVGHEASPLFIRKPSPDDGWGIYELVKSCPPLDVNSAYAYLLLATQFRDSCAVATNEEGEIVGFVSGYVKSNAPDTYFLWQVAVGEKARGTGLARRLVEAVMTRPEMAEVHHLETTITPDNQASWGLFRRLADRWQAPLNSREYFSTDQLGGEHDPENLVRIGPFQTDQI.

The N-acetyltransferase domain maps to 31-192 (LFIRKPSPDD…RIGPFQTDQI (162 aa)).

It belongs to the acetyltransferase family. EctA subfamily.

It carries out the reaction L-2,4-diaminobutanoate + acetyl-CoA = (2S)-4-acetamido-2-aminobutanoate + CoA + H(+). The protein operates within amine and polyamine biosynthesis; ectoine biosynthesis; L-ectoine from L-aspartate 4-semialdehyde: step 2/3. Its function is as follows. Catalyzes the acetylation of L-2,4-diaminobutyrate (DABA) to gamma-N-acetyl-alpha,gamma-diaminobutyric acid (ADABA) with acetyl coenzyme A. Does not acetylate amino acids like GABA, L-ornithine, L-lysine and L-aspartate. The sequence is that of L-2,4-diaminobutyric acid acetyltransferase (ectA) from Halomonas elongata (strain ATCC 33173 / DSM 2581 / NBRC 15536 / NCIMB 2198 / 1H9).